An 849-amino-acid polypeptide reads, in one-letter code: Villin-1 (849 aa).

Gelsolin-like repeat units lie at residues 30–107 (IEKS…DKFL), 147–213 (RVTE…EDGK), 262–335 (VPVE…TVEF), 405–475 (QEQL…PEMF), and 527–566 (AIQV…DHNL). A disordered region spans residues 739–849 (ETPERSLRKS…AVATGTPRRR (111 aa)). Composition is skewed to low complexity over residues 747–782 (KSSS…SAST) and 791–823 (PAAL…STPS).

It belongs to the villin/gelsolin family. In terms of tissue distribution, expressed in roots, young leaves, and inflorescences, mostly in the vasculature of roots, leaves, and filaments of the anthers. Also detected in guard cells.

It is found in the cytoplasm. The protein resides in the cytoskeleton. In terms of biological role, ca(2+)-independent actin-binding protein. Binds actin microfilaments (MFs). Involved in actin filament bundling, severing and capping. Caps the barbed end of actin filaments and protects them from disassembly. Promotes VLN3-mediated MF severing. The sequence is that of Villin-1 from Oryza sativa subsp. japonica (Rice).